Here is a 162-residue protein sequence, read N- to C-terminus: Caveolin-2 (162 aa).

The Cytoplasmic segment spans residues 1–86 (MGLEKEKLEC…FELVKFIFYR (86 aa)). The helical intramembrane region spans 87 to 107 (LLTTLLAVPAAFILGVVFGVL). Over 108 to 162 (SCIHIWLVMPVTRSFLMLLPSIQVVWKSVTDMFITPLFHSMGRSLSSIQVRTSDT) the chain is Cytoplasmic.

Belongs to the caveolin family. As to quaternary structure, homooligomer.

The protein localises to the golgi apparatus membrane. It localises to the cell membrane. It is found in the membrane. Its subcellular location is the caveola. Its function is as follows. May act as a scaffolding protein within caveolar membranes. Interacts directly with G-protein alpha subunits and can functionally regulate their activity. The chain is Caveolin-2 (cav2) from Takifugu rubripes (Japanese pufferfish).